The following is a 410-amino-acid chain: Sprouty-related, EVH1 domain-containing protein 3 (410 aa).

The region spanning 1-113 (MVRVRAVVMA…KSLLAALAAL (113 aa)) is the WH1 domain. Residues 117 to 210 (SLTPSSSSSS…PEPSEPLAGA (94 aa)) are disordered. Composition is skewed to low complexity over residues 120-130 (PSSSSSSSSPS) and 147-165 (DSSSSHSRQETPPSAAAAP). One can recognise a KBD domain in the interval 195–244 (LPFTGIPEPSEPLAGAGGLGWGGRGYEDYRRSGPPAPLALSTCVVRFAKT). R240 bears the Asymmetric dimethylarginine mark. An Omega-N-methylarginine modification is found at R248. Residues 258 to 288 (LPAPLTEAAPPAPPARPPPGPGPSSAPAKAS) are disordered. Residues 267-281 (PPAPPARPPPGPGPS) are compositionally biased toward pro residues. Residues 296 to 407 (RCVHCRALFR…CAGCGGRHEE (112 aa)) enclose the SPR domain.

Interacts with palmitoyltransferase ZDHHC17/HIP14; the interaction leads to palmitoylation of SPRED3. Phosphorylated on tyrosine. In terms of processing, palmitoylated by ZDHHC17/HIP14. Post-translationally, ubiquitinated.

It is found in the cell membrane. Tyrosine kinase substrate that inhibits growth-factor-mediated activation of MAP kinase. Inhibits fibroblast growth factor (FGF)-induced retinal lens fiber differentiation, probably by inhibiting FGF-mediated phosphorylation of ERK1/2. Inhibits TGFB-induced epithelial-to-mesenchymal transition in lens epithelial cells. This is Sprouty-related, EVH1 domain-containing protein 3 (SPRED3) from Homo sapiens (Human).